We begin with the raw amino-acid sequence, 545 residues long: RNA-directed RNA polymerase beta chain (545 aa).

Residues 243–373 enclose the RdRp catalytic domain; sequence RLAQQGSVDG…PNLRKTFVSG (131 aa).

As to quaternary structure, part of the viral RNA-dependent RNA polymerase complex, the other subunits are probably the host ribosomal protein S1, EF-Tu and EF-Ts.

It catalyses the reaction RNA(n) + a ribonucleoside 5'-triphosphate = RNA(n+1) + diphosphate. Functionally, this is the catalytic subunit of the viral RNA-dependent RNA polymerase complex. This complex is involved in viral RNA replication that produces (+)-stranded genomes via a complementary, (-)-stranded intermediate. This chain is RNA-directed RNA polymerase beta chain, found in Escherichia coli (Bacteriophage MS2).